The sequence spans 706 residues: Elongation factor G 1 (706 aa).

Positions 8 to 290 (NRYRNIGICA…AVIDYLPAPT (283 aa)) constitute a tr-type G domain. Residues 17–24 (AHVDAGKT), 88–92 (DTPGH), and 142–145 (NKMD) each bind GTP.

This sequence belongs to the TRAFAC class translation factor GTPase superfamily. Classic translation factor GTPase family. EF-G/EF-2 subfamily.

The protein localises to the cytoplasm. In terms of biological role, catalyzes the GTP-dependent ribosomal translocation step during translation elongation. During this step, the ribosome changes from the pre-translocational (PRE) to the post-translocational (POST) state as the newly formed A-site-bound peptidyl-tRNA and P-site-bound deacylated tRNA move to the P and E sites, respectively. Catalyzes the coordinated movement of the two tRNA molecules, the mRNA and conformational changes in the ribosome. This Pseudomonas aeruginosa (strain ATCC 15692 / DSM 22644 / CIP 104116 / JCM 14847 / LMG 12228 / 1C / PRS 101 / PAO1) protein is Elongation factor G 1.